Reading from the N-terminus, the 31-residue chain is Cytochrome b6-f complex subunit 6 (31 aa).

The helical transmembrane segment at 4–24 threads the bilayer; the sequence is ITSYFGFLLAALTITSVLFIG.

Belongs to the PetL family. In terms of assembly, the 4 large subunits of the cytochrome b6-f complex are cytochrome b6, subunit IV (17 kDa polypeptide, PetD), cytochrome f and the Rieske protein, while the 4 small subunits are PetG, PetL, PetM and PetN. The complex functions as a dimer.

It is found in the plastid. Its subcellular location is the chloroplast thylakoid membrane. Component of the cytochrome b6-f complex, which mediates electron transfer between photosystem II (PSII) and photosystem I (PSI), cyclic electron flow around PSI, and state transitions. PetL is important for photoautotrophic growth as well as for electron transfer efficiency and stability of the cytochrome b6-f complex. This is Cytochrome b6-f complex subunit 6 from Arabidopsis thaliana (Mouse-ear cress).